We begin with the raw amino-acid sequence, 453 residues long: 3-phosphoshikimate 1-carboxyvinyltransferase (453 aa).

3-phosphoshikimate-binding residues include Lys28, Ser29, and Arg33. Lys28 contributes to the phosphoenolpyruvate binding site. Phosphoenolpyruvate is bound by residues Gly101 and Arg129. Ser174, Gln176, Asp326, and Lys353 together coordinate 3-phosphoshikimate. Gln176 lines the phosphoenolpyruvate pocket. Asp326 serves as the catalytic Proton acceptor. Phosphoenolpyruvate contacts are provided by Arg357 and Arg405.

The protein belongs to the EPSP synthase family. In terms of assembly, monomer.

Its subcellular location is the cytoplasm. The catalysed reaction is 3-phosphoshikimate + phosphoenolpyruvate = 5-O-(1-carboxyvinyl)-3-phosphoshikimate + phosphate. It participates in metabolic intermediate biosynthesis; chorismate biosynthesis; chorismate from D-erythrose 4-phosphate and phosphoenolpyruvate: step 6/7. In terms of biological role, catalyzes the transfer of the enolpyruvyl moiety of phosphoenolpyruvate (PEP) to the 5-hydroxyl of shikimate-3-phosphate (S3P) to produce enolpyruvyl shikimate-3-phosphate and inorganic phosphate. This Zymomonas mobilis subsp. mobilis (strain ATCC 31821 / ZM4 / CP4) protein is 3-phosphoshikimate 1-carboxyvinyltransferase.